The primary structure comprises 498 residues: 4-aminobutyrate aminotransferase (498 aa).

Residue 164–165 coordinates pyridoxal 5'-phosphate; the sequence is GS. A substrate-binding site is contributed by Arg-222. Position 356 is an N6-(pyridoxal phosphate)lysine (Lys-356). Thr-381 contributes to the pyridoxal 5'-phosphate binding site.

The protein belongs to the class-III pyridoxal-phosphate-dependent aminotransferase family. As to quaternary structure, homodimer. The cofactor is pyridoxal 5'-phosphate.

The protein localises to the cytoplasm. It carries out the reaction 4-aminobutanoate + 2-oxoglutarate = succinate semialdehyde + L-glutamate. Functionally, deaminates gamma-aminobutyric acid (GABA) to succinate-semialdehyde, which in turn is converted to succinate by the succinate semialdehyde dehydrogenase. Required for the degradation of GABA, which is important for utilization of GABA as nitrogen source. The protein is 4-aminobutyrate aminotransferase (gatA) of Emericella nidulans (strain FGSC A4 / ATCC 38163 / CBS 112.46 / NRRL 194 / M139) (Aspergillus nidulans).